The following is an 88-amino-acid chain: Putative transposase InsN for insertion sequence element IS911B (88 aa).

Belongs to the transposase 8 family.

Involved in the transposition of the insertion sequence IS911. The sequence is that of Putative transposase InsN for insertion sequence element IS911B (insN2) from Escherichia coli (strain K12).